Here is an 875-residue protein sequence, read N- to C-terminus: Receptor-like protein 33 (875 aa).

Residues M1 to A23 form the signal peptide. Residues V24–Q822 are Extracellular-facing. 5 N-linked (GlcNAc...) asparagine glycosylation sites follow: N65, N103, N133, N146, and N181. LRR repeat units follow at residues F110–N133, L134–N157, F159–L182, S183–S205, L206–L230, T231–L254, I256–I278, S280–S302, P303–L327, and N329–H351. 2 N-linked (GlcNAc...) asparagine glycosylation sites follow: N229 and N250. N-linked (GlcNAc...) asparagine glycosylation is present at N299. Residues L352–C377 form an LRR 11; degenerate repeat. N-linked (GlcNAc...) asparagine glycosylation is found at N364, N395, and N411. 15 LRR repeats span residues F378–D401, L404–Q427, R428–Q451, M455–P477, P479–L502, R503–S528, L530–I549, K550–F573, T575–S596, L597–F619, P620–E643, L686–L710, K711–L734, R735–L758, and Y760–T783. N490 and N514 each carry an N-linked (GlcNAc...) asparagine glycan. The N-linked (GlcNAc...) asparagine glycan is linked to N587. N-linked (GlcNAc...) asparagine glycosylation occurs at N633. N717, N757, and N765 each carry an N-linked (GlcNAc...) asparagine glycan. The helical transmembrane segment at V823–I843 threads the bilayer. Residues G844–S875 are Cytoplasmic-facing.

Belongs to the RLP family.

It localises to the cell membrane. The sequence is that of Receptor-like protein 33 from Arabidopsis thaliana (Mouse-ear cress).